The chain runs to 1425 residues: Zinc finger FYVE domain-containing protein 9 (1425 aa).

2 disordered regions span residues 201 to 255 (ESTE…IGRD) and 291 to 352 (EDLT…SGRN). The segment covering 202–225 (STEKDMNSEKQMDPLNRPKTEGRS) has biased composition (basic and acidic residues). Composition is skewed to polar residues over residues 230–245 (CPTS…SPSQ) and 296–312 (KISS…SFSH). 2 positions are modified to phosphoserine: Ser-306 and Ser-668. The FYVE-type zinc finger occupies 699–758 (DSQAPNCMKCEARFTFTKRRHHCRACGKVFCASCCSLKCKLLYMDRKEARVCVICHSVLM). Zn(2+) is bound by residues Cys-705, Cys-708, Cys-721, Cys-724, Cys-729, Cys-732, Cys-750, and Cys-753. Positions 767-823 (MSASSQSPNPNNPAEYCSTIPPLQQAQASGALSSPPPTVMVPVGVLKHPGAEVAQPR) are SBD.

In terms of assembly, interacts (via the SBD region) with SMAD2; the interaction recruits SMAD2 to the TGF-beta receptor and is disrupted by phosphorylation of SMAD2 upon TGF-beta receptor activation. Interacts with SMAD3. Interacts with TGFBR1 and TGFBR2; the interaction recruits SMAD2 to the TGF-beta receptor. Interacts with PML. As to expression, ubiquitous. In the brain found primarily in the cerebrovascular smooth muscle cells and reactive astrocytes.

Its subcellular location is the cytoplasm. The protein localises to the early endosome membrane. Its function is as follows. Early endosomal protein that functions to recruit SMAD2/SMAD3 to intracellular membranes and to the TGF-beta receptor. Plays a significant role in TGF-mediated signaling by regulating the subcellular location of SMAD2 and SMAD3 and modulating the transcriptional activity of the SMAD3/SMAD4 complex. Possibly associated with TGF-beta receptor internalization. This chain is Zinc finger FYVE domain-containing protein 9 (ZFYVE9), found in Homo sapiens (Human).